A 342-amino-acid polypeptide reads, in one-letter code: S-adenosylmethionine:tRNA ribosyltransferase-isomerase (342 aa).

Belongs to the QueA family. Monomer.

It is found in the cytoplasm. It catalyses the reaction 7-aminomethyl-7-carbaguanosine(34) in tRNA + S-adenosyl-L-methionine = epoxyqueuosine(34) in tRNA + adenine + L-methionine + 2 H(+). It participates in tRNA modification; tRNA-queuosine biosynthesis. Functionally, transfers and isomerizes the ribose moiety from AdoMet to the 7-aminomethyl group of 7-deazaguanine (preQ1-tRNA) to give epoxyqueuosine (oQ-tRNA). In Listeria monocytogenes serotype 4b (strain F2365), this protein is S-adenosylmethionine:tRNA ribosyltransferase-isomerase.